The following is a 364-amino-acid chain: Long-wave-sensitive opsin 1 (364 aa).

The Extracellular portion of the chain corresponds to 1-52 (MAQRWGPQKLAGGQPQAGFEDSTQASIFTYTNNNATRDPFEGPNYHIAPRWV). The O-linked (GlcNAc) serine glycan is linked to serine 22. N-linked (GlcNAc...) asparagine glycosylation occurs at asparagine 34. A helical membrane pass occupies residues 53–77 (YHVTSAWMIFVVIASVFTNGLVLAA). At 78–89 (TMRFKKLRHPLN) the chain is on the cytoplasmic side. A helical membrane pass occupies residues 90–115 (WILVNLAVADLAETIIASTISVVNQI). Over 116-129 (YGYFVLGHPMCVVE) the chain is Extracellular. An intrachain disulfide couples cysteine 126 to cysteine 203. The helical transmembrane segment at 130 to 149 (GYTVSLCGITGLWSLAIISW) threads the bilayer. At 150-168 (ERWMVVCKPFGNVRFDAKL) the chain is on the cytoplasmic side. The helical transmembrane segment at 169–192 (AVAGIAFSWIWAAVWTAPPIFGWS) threads the bilayer. The Extracellular portion of the chain corresponds to 193–218 (RYWPHGLKTSCGPDVFSGSSYPGVQS). The helical transmembrane segment at 219–246 (YMIVLMITCCIIPLSVIVLCYLQVWLAI) threads the bilayer. Topologically, residues 247–268 (RAVAKQQKESESTQKAEKEVTR) are cytoplasmic. A helical membrane pass occupies residues 269–292 (MVMVMVFAFCLCWGPYTFFACFAA). Residues 293–300 (AHPGYAFH) are Extracellular-facing. The helical transmembrane segment at 301-325 (PLVAALPAYFAKSATIYNPIIYVFM) threads the bilayer. Lysine 312 bears the N6-(retinylidene)lysine mark. Residues 326 to 364 (NRQFRNCILQLFGKKVDDSSELSSVSKTEASSVSSVSPA) are Cytoplasmic-facing.

This sequence belongs to the G-protein coupled receptor 1 family. Opsin subfamily. Post-translationally, phosphorylated on some or all of the serine and threonine residues present in the C-terminal region. As to expression, the three color pigments are found in the cone photoreceptor cells. Expressed in retina.

Its subcellular location is the membrane. In terms of biological role, visual pigments are the light-absorbing molecules that mediate vision. They consist of an apoprotein, opsin, covalently linked to cis-retinal. This chain is Long-wave-sensitive opsin 1 (OPN1LW), found in Equus caballus (Horse).